We begin with the raw amino-acid sequence, 274 residues long: ATP synthase subunit a (274 aa).

5 helical membrane-spanning segments follow: residues 43 to 63, 103 to 123, 149 to 169, 223 to 243, and 245 to 265; these read TLNI…LLVF, VIAP…MMDL, DVSI…FYSI, LIFI…LSVP, and AIFH…LTIV.

Belongs to the ATPase A chain family. In terms of assembly, F-type ATPases have 2 components, CF(1) - the catalytic core - and CF(0) - the membrane proton channel. CF(1) has five subunits: alpha(3), beta(3), gamma(1), delta(1), epsilon(1). CF(0) has three main subunits: a(1), b(2) and c(9-12). The alpha and beta chains form an alternating ring which encloses part of the gamma chain. CF(1) is attached to CF(0) by a central stalk formed by the gamma and epsilon chains, while a peripheral stalk is formed by the delta and b chains.

The protein localises to the cell inner membrane. Functionally, key component of the proton channel; it plays a direct role in the translocation of protons across the membrane. The chain is ATP synthase subunit a from Yersinia pestis bv. Antiqua (strain Angola).